Consider the following 601-residue polypeptide: Probable sphingosine-1-phosphate lyase (601 aa).

Position 360 is an N6-(pyridoxal phosphate)lysine (Lys-360).

It belongs to the group II decarboxylase family. Sphingosine-1-phosphate lyase subfamily. Pyridoxal 5'-phosphate is required as a cofactor.

It carries out the reaction sphinganine 1-phosphate = hexadecanal + phosphoethanolamine. In terms of biological role, cleaves phosphorylated sphingoid bases (PSBs), such as sphingosine-1-phosphate, into fatty aldehydes and phosphoethanolamine. Possibly implicated in influencing the macrophage autophagy pathway. The polypeptide is Probable sphingosine-1-phosphate lyase (Legionella pneumophila subsp. pneumophila (strain Philadelphia 1 / ATCC 33152 / DSM 7513)).